Reading from the N-terminus, the 559-residue chain is Chaperonin GroEL 1 (559 aa).

ATP-binding positions include 29-32, 86-90, G413, 476-478, and D492; these read TIGP, DGTTT, and NAL. The segment at 521–541 is disordered; that stretch reads KPEPPAPAPAGDGDPMGGMGG.

Belongs to the chaperonin (HSP60) family. Forms a cylinder of 14 subunits composed of two heptameric rings stacked back-to-back. Interacts with the co-chaperonin GroES.

It is found in the cytoplasm. The catalysed reaction is ATP + H2O + a folded polypeptide = ADP + phosphate + an unfolded polypeptide.. Its function is as follows. Together with its co-chaperonin GroES, plays an essential role in assisting protein folding. The GroEL-GroES system forms a nano-cage that allows encapsulation of the non-native substrate proteins and provides a physical environment optimized to promote and accelerate protein folding. This Synechococcus sp. (strain CC9605) protein is Chaperonin GroEL 1.